Reading from the N-terminus, the 448-residue chain is Extracellular serine protease (448 aa).

An N-terminal signal peptide occupies residues Met1–Gly20. The disordered stretch occupies residues Lys87 to Leu109.

This sequence belongs to the peptidase S17 family. It depends on a divalent metal cation as a cofactor.

In terms of biological role, this enzyme is a chymotrypsin-like serine protease. Degrades a variety of substrates present in the skin and hoof of the sheep, including elastin, keratin, fibrinogen and collagen. It seems to play an important role in the pathogenesis of sheep footrot. The polypeptide is Extracellular serine protease (prvA) (Dichelobacter nodosus (Bacteroides nodosus)).